Here is a 131-residue protein sequence, read N- to C-terminus: UPF0102 protein YraN (131 aa).

Residues 1 to 19 show a composition bias toward polar residues; it reads MATVPTRSGSPRQLTTKQT. The interval 1–21 is disordered; that stretch reads MATVPTRSGSPRQLTTKQTGD.

This sequence belongs to the UPF0102 family.

The protein is UPF0102 protein YraN of Escherichia coli O45:K1 (strain S88 / ExPEC).